The sequence spans 55 residues: Photosystem II reaction center X protein (55 aa).

The chain crosses the membrane as a helical span at residues 24–44 (IGSFLAAAALIVVPAASFLLW).

It belongs to the PsbX family. Type 2 subfamily. PSII consists of a core antenna complex that captures photons, and an electron transfer chain that converts photonic excitation into a charge separation. PSII forms dimeric complexes.

It localises to the cellular thylakoid membrane. In terms of biological role, involved in the binding and/or turnover of quinones at the Q(B) site of Photosystem II. In Prochlorococcus marinus (strain SARG / CCMP1375 / SS120), this protein is Photosystem II reaction center X protein.